A 192-amino-acid chain; its full sequence is Protein GrpE (192 aa).

Residues Met1 to Asn41 form a disordered region.

It belongs to the GrpE family. In terms of assembly, homodimer.

It localises to the cytoplasm. In terms of biological role, participates actively in the response to hyperosmotic and heat shock by preventing the aggregation of stress-denatured proteins, in association with DnaK and GrpE. It is the nucleotide exchange factor for DnaK and may function as a thermosensor. Unfolded proteins bind initially to DnaJ; upon interaction with the DnaJ-bound protein, DnaK hydrolyzes its bound ATP, resulting in the formation of a stable complex. GrpE releases ADP from DnaK; ATP binding to DnaK triggers the release of the substrate protein, thus completing the reaction cycle. Several rounds of ATP-dependent interactions between DnaJ, DnaK and GrpE are required for fully efficient folding. This chain is Protein GrpE, found in Lactobacillus johnsonii (strain CNCM I-12250 / La1 / NCC 533).